The chain runs to 384 residues: MSVVGIVAEYNPFHSGHEFLMNQARLIAGDDPIIAVMSGNYVQRGEMAILDKWSRARSAIEAGADLVFELPFSYAVQAADMFATGGVDLLTRLGAKNLVFGVEDANLNFEYFGDRISKIPRQRQEFADYSQTYSTQYNQMVAREIGHEVSEPNAILGLAYAVANANLGSPLKLSPVNRVGAGHDDILQREAVVQSASAIRNLLLNGAERSELEQWLPKGEIAAFDQEKVLPNWELLFPFLKYRLESASIKELQQIYQMSEGLEYKFKAEIHLAENFADFLRRVKSKRYTYSRLRRLSLYTLLNVTEADVLNSYDHVSTMLLAYSKRGRKYLKQQRKDFEIDIVSKVDRKNAQEGTLGLQVRVDRLFEQIVGADQNFGRRPLEVN.

ATP-binding positions include 7 to 20 (VAEYNPFHSGHEFL), glycine 101, asparagine 153, and arginine 178.

It belongs to the TmcAL family.

The protein resides in the cytoplasm. The enzyme catalyses cytidine(34) in elongator tRNA(Met) + acetate + ATP = N(4)-acetylcytidine(34) in elongator tRNA(Met) + AMP + diphosphate. Catalyzes the formation of N(4)-acetylcytidine (ac(4)C) at the wobble position of elongator tRNA(Met), using acetate and ATP as substrates. First activates an acetate ion to form acetyladenylate (Ac-AMP) and then transfers the acetyl group to tRNA to form ac(4)C34. In Lactobacillus delbrueckii subsp. bulgaricus (strain ATCC BAA-365 / Lb-18), this protein is tRNA(Met) cytidine acetate ligase.